We begin with the raw amino-acid sequence, 86 residues long: U15-lycotoxin-Ls1d (86 aa).

The N-terminal stretch at 1–20 (MNSKIFAVLLLLAFLSCVLS) is a signal peptide. The WAP domain occupies 21–66 (DQYCPKSSITACKKMNIRNDCCKDDDCTGGSWCCATPCGNFCKYPT). Disulfide bonds link Cys24–Cys54, Cys32–Cys58, Cys41–Cys53, Cys42–Cys80, and Cys47–Cys62.

The protein belongs to the venom protein 11 family. 01 (wap-1) subfamily. Post-translationally, contains 5 disulfide bonds. As to expression, expressed by the venom gland.

The protein resides in the secreted. Its function is as follows. Has antibacterial activity. This chain is U15-lycotoxin-Ls1d, found in Lycosa singoriensis (Wolf spider).